We begin with the raw amino-acid sequence, 209 residues long: Geminin (209 aa).

The disordered stretch occupies residues Met-1–Gly-79. Positions Gln-7–Ile-16 are enriched in basic and acidic residues. Lys-27 bears the N6-acetyllysine mark. Ser-34, Ser-36, Ser-49, Ser-63, and Ser-64 each carry phosphoserine. The segment at Thr-82–Glu-161 is necessary and sufficient for interaction with IDAS and CDT1. The stretch at Pro-94–Val-144 forms a coiled coil. The tract at residues Asp-164–Ile-209 is disordered. Residues Asp-170–Glu-190 are homeodomain binding. The span at Asp-170 to Glu-190 shows a compositional bias: acidic residues. Ser-184 is modified (phosphoserine; by CK2). Residues Thr-198 to Ile-209 are compositionally biased toward polar residues.

Belongs to the geminin family. Homotetramer. Interacts with CDT1; this inhibits binding of the MCM complex to origins of replication. The complex with CDT1 exists in two forms, a 'permissive' heterotrimer and an 'inhibitory' heterohexamer. Interacts (via coiled-coil domain) with IDAS (via coiled-coil domain); this targets GMNN to the nucleus. The heterodimer formed by GMNN and MCIDAS has much lower affinity for CDT1 than the GMNN homodimer. Interacts with a subset of Hox proteins, affinity increasing from anterior to posterior types, the strongest interaction being with HOXB1, HOXC9 and HOXD10. Interacts with LRWD1 from G1/S to mitosis. In terms of processing, phosphorylated during mitosis. Phosphorylation at Ser-184 by CK2 results in enhanced binding to Hox proteins and more potent inhibitory effect on Hox transcriptional activity.

Its subcellular location is the cytoplasm. It is found in the nucleus. Inhibits DNA replication by preventing the incorporation of MCM complex into pre-replication complex (pre-RC). It is degraded during the mitotic phase of the cell cycle. Its destruction at the metaphase-anaphase transition permits replication in the succeeding cell cycle. Inhibits histone acetyltransferase activity of KAT7/HBO1 in a CDT1-dependent manner, inhibiting histone H4 acetylation and DNA replication licensing. Inhibits the transcriptional activity of a subset of Hox proteins, enrolling them in cell proliferative control. The sequence is that of Geminin (GMNN) from Homo sapiens (Human).